An 82-amino-acid polypeptide reads, in one-letter code: Large ribosomal subunit protein uL23 (82 aa).

It belongs to the universal ribosomal protein uL23 family. Part of the 50S ribosomal subunit. Contacts protein L29.

Functionally, binds to 23S rRNA. One of the proteins that surrounds the polypeptide exit tunnel on the outside of the ribosome. This chain is Large ribosomal subunit protein uL23, found in Methanosarcina mazei (strain ATCC BAA-159 / DSM 3647 / Goe1 / Go1 / JCM 11833 / OCM 88) (Methanosarcina frisia).